Consider the following 2135-residue polypeptide: Nonribosomal peptide synthetase gliP (2135 aa).

The tract at residues 34–424 (TYTELDVASS…LPADVEEPLR (391 aa)) is adenylation 1. The region spanning 519–594 (TEREQVIAEC…GILPYARDLA (76 aa)) is the Carrier 1 domain. S555 carries the O-(pantetheine 4'-phosphoryl)serine modification. The tract at residues 663 to 913 (AEHICNAWRQ…MATLPLVCRI (251 aa)) is condensation 1. Residues 1078–1458 (YRELDQKSNA…YQEEPRLTQA (381 aa)) form an adenylation 2 region. The Carrier 2 domain occupies 1544 to 1622 (ASIADGIATL…EQVELVRRKR (79 aa)). S1582 is subject to O-(pantetheine 4'-phosphoryl)serine. The tract at residues 1642 to 1905 (SPLERQTWFQ…FLDRLPLRFK (264 aa)) is condensation 2. The Carrier 3 domain occupies 2061 to 2134 (RRLVGILQRE…DLAQRLYRQV (74 aa)). S2095 is modified (O-(pantetheine 4'-phosphoryl)serine).

This sequence belongs to the NRP synthetase family.

The protein operates within mycotoxin biosynthesis. In terms of biological role, nonribosomal peptide synthetase; part of the gene cluster that mediates the biosynthesis of gliotoxin, a member of the epipolythiodioxopiperazine (ETP) class of toxins characterized by a disulfide-bridged cyclic dipeptide. The first step in gliotoxin biosynthesis is the condensation of serine and phenylalanine to form the cyclo-L-phenylalanyl-L-serine diketopiperazine (DKP) by the NRPS gliP. GliP is also able to produce the DKP cyclo-L-tryptophanyl-L-serine, suggesting that the substrate specificity of the first adenylation (A) domain in gliP is sufficiently relaxed to accommodate both L-Phe and L-Trp. The cytochrome P450 monooxygenase gliC has been shown to catalyze the subsequent hydroxylation of the alpha-carbon of L-Phe in cyclo-L-phenylalanyl-L-serine whereas the second cytochrome P450 enzyme, gliF, is presumably involved in the modification of the DKP side chain. The glutathione S-transferase (GST) gliG then forms a bis-glutathionylated biosynthetic intermediate which is responsible for the sulfurization of gliotoxin. This bis-glutathionylated intermediate is subsequently processed by the gamma-glutamyl cyclotransferase gliK to remove both gamma-glutamyl moieties. Subsequent processing via gliI yields a biosynthetic intermediate, which is N-methylated via the N-methyltransferase gliN, before the gliotoxin oxidoreductase gliT-mediated disulfide bridge closure. GliN-mediated amide methylation confers stability to ETP, damping the spontaneous formation of tri- and tetrasulfides. Intracellular dithiol gliotoxin oxidized by gliT is subsequently effluxed by gliA. Gliotoxin contributes to pathogenesis during invasive aspergillosis. In macrophages and neutrophils, gliotoxin showed inhibition of various different cell functions including cytokine production, antigen presentation, phagocytosis, and production of reactive oxygen species. The chain is Nonribosomal peptide synthetase gliP from Aspergillus fumigatus (strain ATCC MYA-4609 / CBS 101355 / FGSC A1100 / Af293) (Neosartorya fumigata).